Reading from the N-terminus, the 424-residue chain is Deoxyguanosinetriphosphate triphosphohydrolase-like protein (424 aa).

The span at 1-10 shows a compositional bias: pro residues; that stretch reads MEGTAPPTPY. The interval 1-31 is disordered; the sequence is MEGTAPPTPYDPASVARYAPEPDKRPGRTAF. Over residues 20–31 the composition is skewed to basic and acidic residues; it reads PEPDKRPGRTAF. The region spanning 70 to 220 is the HD domain; that stretch reads RLTHSLECAQ…MDWADDVAYS (151 aa).

Belongs to the dGTPase family. Type 2 subfamily.

This is Deoxyguanosinetriphosphate triphosphohydrolase-like protein from Streptomyces coelicolor (strain ATCC BAA-471 / A3(2) / M145).